A 491-amino-acid chain; its full sequence is Lysine--tRNA ligase (491 aa).

Mg(2+) contacts are provided by E398 and E405.

Belongs to the class-II aminoacyl-tRNA synthetase family. Homodimer. Requires Mg(2+) as cofactor.

The protein localises to the cytoplasm. The catalysed reaction is tRNA(Lys) + L-lysine + ATP = L-lysyl-tRNA(Lys) + AMP + diphosphate. This chain is Lysine--tRNA ligase, found in Mycoplasmopsis synoviae (strain 53) (Mycoplasma synoviae).